The chain runs to 141 residues: Nucleoside diphosphate kinase (141 aa).

ATP-binding residues include K11, F59, R87, T93, R104, and N114. Catalysis depends on H117, which acts as the Pros-phosphohistidine intermediate.

This sequence belongs to the NDK family. As to quaternary structure, homotetramer. Mg(2+) is required as a cofactor.

It is found in the cytoplasm. The enzyme catalyses a 2'-deoxyribonucleoside 5'-diphosphate + ATP = a 2'-deoxyribonucleoside 5'-triphosphate + ADP. It carries out the reaction a ribonucleoside 5'-diphosphate + ATP = a ribonucleoside 5'-triphosphate + ADP. In terms of biological role, major role in the synthesis of nucleoside triphosphates other than ATP. The ATP gamma phosphate is transferred to the NDP beta phosphate via a ping-pong mechanism, using a phosphorylated active-site intermediate. The sequence is that of Nucleoside diphosphate kinase from Xylella fastidiosa (strain M23).